Reading from the N-terminus, the 305-residue chain is Sulfate adenylyltransferase subunit 2 (305 aa).

The protein belongs to the PAPS reductase family. CysD subfamily. In terms of assembly, heterodimer composed of CysD, the smaller subunit, and CysN.

The enzyme catalyses sulfate + ATP + H(+) = adenosine 5'-phosphosulfate + diphosphate. It participates in sulfur metabolism; hydrogen sulfide biosynthesis; sulfite from sulfate: step 1/3. In terms of biological role, with CysN forms the ATP sulfurylase (ATPS) that catalyzes the adenylation of sulfate producing adenosine 5'-phosphosulfate (APS) and diphosphate, the first enzymatic step in sulfur assimilation pathway. APS synthesis involves the formation of a high-energy phosphoric-sulfuric acid anhydride bond driven by GTP hydrolysis by CysN coupled to ATP hydrolysis by CysD. The protein is Sulfate adenylyltransferase subunit 2 of Pseudomonas fluorescens (strain SBW25).